The chain runs to 91 residues: uncharacterized protein (91 aa).

The protein localises to the plastid. It localises to the cyanelle. This is an uncharacterized protein from Cyanophora paradoxa.